The chain runs to 199 residues: Transcription regulator complex subunit bur6 (199 aa).

The disordered stretch occupies residues 106–199 (PPIKAERKTK…SEASSASGDE (94 aa)). The segment covering 112-121 (RKTKRPRARR) has biased composition (basic residues). Positions 185 to 199 (SDKTTSEASSASGDE) are enriched in polar residues.

Belongs to the NC2 alpha/DRAP1 family.

It is found in the nucleus. In terms of biological role, transcription regulator complex subunit that is essential for cell cycle progression. The protein is Transcription regulator complex subunit bur6 of Schizosaccharomyces pombe (strain 972 / ATCC 24843) (Fission yeast).